The sequence spans 335 residues: 7,8-didemethyl-8-hydroxy-5-deazariboflavin synthase (335 aa).

A Radical SAM core domain is found at 1 to 246 (MTYSKNVFIP…QVAPNLIDPK (246 aa)). Residues Cys-15, Cys-19, and Cys-22 each coordinate [4Fe-4S] cluster.

This sequence belongs to the radical SAM superfamily. CofG family. As to quaternary structure, consists of two subunits, CofG and CofH. Requires [4Fe-4S] cluster as cofactor.

The catalysed reaction is 5-amino-5-(4-hydroxybenzyl)-6-(D-ribitylimino)-5,6-dihydrouracil + S-adenosyl-L-methionine = 7,8-didemethyl-8-hydroxy-5-deazariboflavin + 5'-deoxyadenosine + L-methionine + NH4(+) + H(+). It participates in cofactor biosynthesis; coenzyme F0 biosynthesis. In terms of biological role, catalyzes the radical-mediated synthesis of 7,8-didemethyl-8-hydroxy-5-deazariboflavin from 5-amino-5-(4-hydroxybenzyl)-6-(D-ribitylimino)-5,6-dihydrouracil. The chain is 7,8-didemethyl-8-hydroxy-5-deazariboflavin synthase from Methanosarcina mazei (strain ATCC BAA-159 / DSM 3647 / Goe1 / Go1 / JCM 11833 / OCM 88) (Methanosarcina frisia).